We begin with the raw amino-acid sequence, 720 residues long: Catalase-peroxidase (720 aa).

The segment at residues 94–222 (WHAAGTYRIA…LAAVTMGLIY (129 aa)) is a cross-link (tryptophyl-tyrosyl-methioninium (Trp-Tyr) (with M-248)). The Proton acceptor role is filled by His-95. A cross-link (tryptophyl-tyrosyl-methioninium (Tyr-Met) (with W-94)) is located at residues 222–248 (YVNPEGVDGNPDPLKTAHDVRVTFARM). A heme b-binding site is contributed by His-263.

Belongs to the peroxidase family. Peroxidase/catalase subfamily. In terms of assembly, homodimer. Heme b is required as a cofactor. In terms of processing, formation of the three residue Trp-Tyr-Met cross-link is important for the catalase, but not the peroxidase activity of the enzyme.

It catalyses the reaction H2O2 + AH2 = A + 2 H2O. It carries out the reaction 2 H2O2 = O2 + 2 H2O. In terms of biological role, bifunctional enzyme with both catalase and broad-spectrum peroxidase activity. In Synechococcus elongatus (strain ATCC 33912 / PCC 7942 / FACHB-805) (Anacystis nidulans R2), this protein is Catalase-peroxidase.